A 398-amino-acid polypeptide reads, in one-letter code: KiSS-1 receptor (398 aa).

Over 1–46 (MHTVATSGPNASWGAPANASGCPGCGANASDGPVPSPRAVDAWLVP) the chain is Extracellular. N-linked (GlcNAc...) asparagine glycans are attached at residues asparagine 10, asparagine 18, and asparagine 28. Residues 47–67 (LFFAALMLLGLVGNSLVIYVI) form a helical membrane-spanning segment. The Cytoplasmic segment spans residues 68-78 (CRHKPMRTVTN). Residues 79 to 101 (FYIANLAATDVTFLLCCVPFTAL) form a helical membrane-spanning segment. The Extracellular segment spans residues 102–120 (LYPLPGWVLGDFMCKFVNY). An intrachain disulfide couples cysteine 115 to cysteine 191. The chain crosses the membrane as a helical span at residues 121–138 (IQQVSVQATCATLTAMSV). The Cytoplasmic portion of the chain corresponds to 139–157 (DRWYVTVFPLRALHRRTPR). A helical membrane pass occupies residues 158-178 (LALAVSLSIWVGSAAVSAPVL). The Extracellular segment spans residues 179-202 (ALHRLSPGPRAYCSEAFPSRALER). A helical transmembrane segment spans residues 203–223 (AFALYNLLALYLLPLLATCAC). Topologically, residues 224-263 (YAAMLRHLGRVAVRPAPADSALQGQVLAERAGAVRAKVSR) are cytoplasmic. Residues 264-284 (LVAAVVLLFAACWGPIQLFLV) form a helical membrane-spanning segment. Topologically, residues 285-305 (LQALGPAGSWHPRSYAAYALK) are extracellular. The chain crosses the membrane as a helical span at residues 306–328 (TWAHCMSYSNSALNPLLYAFLGS). The Cytoplasmic segment spans residues 329–398 (HFRQAFRRVC…CVLGEDNAPL (70 aa)). The tract at residues 341-363 (APRRPRRPRRPGPSDPAAPHAEL) is disordered.

The protein belongs to the G-protein coupled receptor 1 family. In terms of tissue distribution, most highly expressed in the pancreas, placenta and spinal cord, with lower-level of expression in peripheral blood leukocytes, kidney, lung, fetal liver, stomach, small intestine, testes, spleen, thymus, adrenal glands and lymph nodes. In the adult brain, expressed in the superior frontal gyrus, putamen, caudate nucleus, cingulate gyrus, nucleus accumbens, hippocampus, pons and amygdala, as well as the hypothalamus and pituitary. Expression levels are higher in early (7-9 weeks) than term placentas. Expression levels were increased in both early placentas and molar pregnancies and were reduced in choriocarcinoma cells. Expressed at higher levels in first trimester trophoblasts than at term of gestation. Also found in the extravillous trophoblast suggesting endocrine/paracrine activation mechanism.

It localises to the cell membrane. Its function is as follows. Receptor for metastin (kisspeptin-54 or kp-54), a C-terminally amidated peptide of KiSS1. KiSS1 is a metastasis suppressor protein that suppresses metastases in malignant melanomas and in some breast carcinomas without affecting tumorigenicity. The metastasis suppressor properties may be mediated in part by cell cycle arrest and induction of apoptosis in malignant cells. The receptor is essential for normal gonadotropin-released hormone physiology and for puberty. The hypothalamic KiSS1/KISS1R system is a pivotal factor in central regulation of the gonadotropic axis at puberty and in adulthood. The receptor is also probably involved in the regulation and fine-tuning of trophoblast invasion generated by the trophoblast itself. Analysis of the transduction pathways activated by the receptor identifies coupling to phospholipase C and intracellular calcium release through pertussis toxin-insensitive G(q) proteins. The polypeptide is KiSS-1 receptor (KISS1R) (Homo sapiens (Human)).